The following is a 119-amino-acid chain: Beta-2-microglobulin (119 aa).

The first 20 residues, Met1–Ala20, serve as a signal peptide directing secretion. The 90-residue stretch at Pro25 to Lys114 folds into the Ig-like C1-type domain. The cysteines at positions 45 and 100 are disulfide-linked.

It belongs to the beta-2-microglobulin family. In terms of assembly, heterodimer of an alpha chain and a beta chain. Beta-2-microglobulin is the beta-chain of major histocompatibility complex class I molecules.

Its subcellular location is the secreted. Component of the class I major histocompatibility complex (MHC). Involved in the presentation of peptide antigens to the immune system. This Ateles paniscus (Black spider monkey) protein is Beta-2-microglobulin (B2M).